We begin with the raw amino-acid sequence, 621 residues long: Transmembrane protein 200C (621 aa).

The disordered stretch occupies residues 12–37 (ARKQDPLRPPSQIPKRKRKAKKRRKN). Residues 25 to 36 (PKRKRKAKKRRK) show a composition bias toward basic residues. Residues 53–73 (GLIALCGILVLLVGIAMAVVG) form a helical membrane-spanning segment. Residues 80–147 (GTNREGGKQL…RAASPSSSST (68 aa)) form a disordered region. The segment covering 125-147 (SSSAGAPRSTPPARAASPSSSST) has biased composition (low complexity). A helical transmembrane segment spans residues 167–187 (VFGPLIMGIGIFLFICANAVL). Disordered stretches follow at residues 284 to 315 (WPPHPAAPSGGRPRGAASPPDLASSPRCPREP), 347 to 368 (ASSCSSPAPCSPPESWGRQSTA), and 384 to 598 (LQGG…FTNK). Residues 290 to 303 (APSGGRPRGAASPP) are compositionally biased toward low complexity. Residues 405–418 (PGERGSQEIPRGEL) are compositionally biased toward basic and acidic residues. Residues 479-490 (RAPPSPEPPPSP) show a composition bias toward pro residues. Low complexity-rich tracts occupy residues 491 to 505 (GSADPDSSPLAKAAS) and 523 to 533 (GSSQSDDPSSS). A compositionally biased stretch (polar residues) spans 586–595 (EQPQPVQRQF).

The protein belongs to the TMEM200 family.

Its subcellular location is the membrane. In Homo sapiens (Human), this protein is Transmembrane protein 200C (TMEM200C).